A 349-amino-acid polypeptide reads, in one-letter code: tRNA pseudouridine synthase D (349 aa).

Substrate is bound at residue Phe26. Asp79 serves as the catalytic Nucleophile. Asn128 lines the substrate pocket. One can recognise a TRUD domain in the interval 154–302; that stretch reads GVPNYFGSQR…VEGSRRAVLL (149 aa). Substrate is bound at residue Phe328.

The protein belongs to the pseudouridine synthase TruD family.

It catalyses the reaction uridine(13) in tRNA = pseudouridine(13) in tRNA. Functionally, responsible for synthesis of pseudouridine from uracil-13 in transfer RNAs. The protein is tRNA pseudouridine synthase D of Yersinia pseudotuberculosis serotype O:1b (strain IP 31758).